The sequence spans 142 residues: Hemoglobin subunit alpha-1 (142 aa).

Residues 2 to 142 enclose the Globin domain; the sequence is VLSPADKTNI…VSTVLTSKYR (141 aa). O2 is bound at residue His59. His88 serves as a coordination point for heme b.

The protein belongs to the globin family. As to quaternary structure, heterotetramer of two alpha chains and two beta chains. Red blood cells.

In terms of biological role, involved in oxygen transport from the lung to the various peripheral tissues. In Arctocephalus galapagoensis (Galapagoes fur seal), this protein is Hemoglobin subunit alpha-1.